A 330-amino-acid polypeptide reads, in one-letter code: Beta-hexosaminidase (330 aa).

Substrate contacts are provided by residues aspartate 62, arginine 70, arginine 130, and 160–161 (KH). Histidine 173 (proton donor/acceptor) is an active-site residue. Aspartate 242 acts as the Nucleophile in catalysis.

The protein belongs to the glycosyl hydrolase 3 family. NagZ subfamily. As to quaternary structure, monomer.

It localises to the cytoplasm. The catalysed reaction is Hydrolysis of terminal non-reducing N-acetyl-D-hexosamine residues in N-acetyl-beta-D-hexosaminides.. Its pathway is cell wall biogenesis; peptidoglycan recycling. Plays a role in peptidoglycan recycling by cleaving the terminal beta-1,4-linked N-acetylglucosamine (GlcNAc) from peptide-linked peptidoglycan fragments, giving rise to free GlcNAc, anhydro-N-acetylmuramic acid and anhydro-N-acetylmuramic acid-linked peptides. Plays a role in beta-lactam antibiotic resistance via its role in generating anhydro-N-acetylmuramic acid-linked peptides; these peptides function as signaling molecules that induce high-level expression of the beta-lactamase AmpC. This chain is Beta-hexosaminidase, found in Vibrio cholerae serotype O1 (strain ATCC 39315 / El Tor Inaba N16961).